The chain runs to 300 residues: Ribosomal protein L11 methyltransferase (300 aa).

S-adenosyl-L-methionine contacts are provided by Thr147, Gly168, Asp190, and Asn236.

This sequence belongs to the methyltransferase superfamily. PrmA family.

The protein localises to the cytoplasm. It carries out the reaction L-lysyl-[protein] + 3 S-adenosyl-L-methionine = N(6),N(6),N(6)-trimethyl-L-lysyl-[protein] + 3 S-adenosyl-L-homocysteine + 3 H(+). Its function is as follows. Methylates ribosomal protein L11. This is Ribosomal protein L11 methyltransferase from Leptospira borgpetersenii serovar Hardjo-bovis (strain JB197).